The chain runs to 457 residues: Siroheme synthase (457 aa).

The interval 1-204 is precorrin-2 dehydrogenase /sirohydrochlorin ferrochelatase; it reads MDHLPIFCQL…NDQKAITETT (204 aa). Residues 22 to 23 and 43 to 44 contribute to the NAD(+) site; these read DV and LA. Position 128 is a phosphoserine (S128). The interval 216 to 457 is uroporphyrinogen-III C-methyltransferase; it reads GEVVLVGAGP…RDKLNWFSNH (242 aa). P225 serves as a coordination point for S-adenosyl-L-methionine. Catalysis depends on D248, which acts as the Proton acceptor. K270 (proton donor) is an active-site residue. S-adenosyl-L-methionine is bound by residues 301–303, I306, 331–332, M382, and G411; these read GGD and TA.

In the N-terminal section; belongs to the precorrin-2 dehydrogenase / sirohydrochlorin ferrochelatase family. It in the C-terminal section; belongs to the precorrin methyltransferase family.

The catalysed reaction is uroporphyrinogen III + 2 S-adenosyl-L-methionine = precorrin-2 + 2 S-adenosyl-L-homocysteine + H(+). It carries out the reaction precorrin-2 + NAD(+) = sirohydrochlorin + NADH + 2 H(+). The enzyme catalyses siroheme + 2 H(+) = sirohydrochlorin + Fe(2+). It functions in the pathway cofactor biosynthesis; adenosylcobalamin biosynthesis; precorrin-2 from uroporphyrinogen III: step 1/1. Its pathway is cofactor biosynthesis; adenosylcobalamin biosynthesis; sirohydrochlorin from precorrin-2: step 1/1. It participates in porphyrin-containing compound metabolism; siroheme biosynthesis; precorrin-2 from uroporphyrinogen III: step 1/1. The protein operates within porphyrin-containing compound metabolism; siroheme biosynthesis; siroheme from sirohydrochlorin: step 1/1. It functions in the pathway porphyrin-containing compound metabolism; siroheme biosynthesis; sirohydrochlorin from precorrin-2: step 1/1. Its function is as follows. Multifunctional enzyme that catalyzes the SAM-dependent methylations of uroporphyrinogen III at position C-2 and C-7 to form precorrin-2 via precorrin-1. Then it catalyzes the NAD-dependent ring dehydrogenation of precorrin-2 to yield sirohydrochlorin. Finally, it catalyzes the ferrochelation of sirohydrochlorin to yield siroheme. The protein is Siroheme synthase of Escherichia coli O7:K1 (strain IAI39 / ExPEC).